A 408-amino-acid polypeptide reads, in one-letter code: Protein SPATA31F3 (408 aa).

Residues 11–31 (VGYPFYTYGSIIIIALIIWQV) traverse the membrane as a helical segment. Positions 51 to 71 (QKVKQRAKEKTPRARRHSRKE) are disordered. S152 is subject to Phosphoserine. Disordered stretches follow at residues 297 to 316 (TKTK…MKGA) and 351 to 408 (LPLS…SASS). The segment covering 351–392 (LPLSSGSSKRSPLLTCATQPENPSHVSVSTSAEGTCLPQEST) has biased composition (polar residues).

It belongs to the SPATA31 family.

It is found in the membrane. This chain is Protein SPATA31F3 (SPATA31F3), found in Bos taurus (Bovine).